Here is a 250-residue protein sequence, read N- to C-terminus: uncharacterized protein (250 aa).

Residues 7–244 (LKVEDLHVYR…YKKECGKCYK (238 aa)) enclose the ABC transporter domain. 39–46 (GPNGAGKS) provides a ligand contact to ATP.

This sequence belongs to the ABC transporter superfamily.

This is an uncharacterized protein from Methanocaldococcus jannaschii (strain ATCC 43067 / DSM 2661 / JAL-1 / JCM 10045 / NBRC 100440) (Methanococcus jannaschii).